The chain runs to 172 residues: MFYHISLEHEILLHPRYFGPNLLNTVKQKLFTEVEGTCTGKYGFVIAVTTIDNIGAGVIQPGRGFVLYPVKYKAIVFRPFKGEVVDAVVTQVNKVGLFTEIGPMSCFISRHSIPSEMEFDPNSNPPCYKTVDEDVVIQQDDEIRLKIVGTRVDKNDIFAIGSLMDDYLGLVS.

Belongs to the eukaryotic RPB7/RPC8 RNA polymerase subunit family. As to quaternary structure, component of the RNA polymerase II (Pol II) complex consisting of 12 subunits. RPB4 and RPB7 form a subcomplex that protrudes from the 10-subunit Pol II core complex.

It localises to the nucleus. DNA-dependent RNA polymerase catalyzes the transcription of DNA into RNA using the four ribonucleoside triphosphates as substrates. Component of RNA polymerase II which synthesizes mRNA precursors and many functional non-coding RNAs. Pol II is the central component of the basal RNA polymerase II transcription machinery. It is composed of mobile elements that move relative to each other. RPB7 is part of a subcomplex with RPB4 that binds to a pocket formed by RPB1, RPB2 and RPB6 at the base of the clamp element. The RPB4-RPB7 subcomplex seems to lock the clamp via RPB7 in the closed conformation thus preventing double-stranded DNA to enter the active site cleft. The RPB4-RPB7 subcomplex binds single-stranded DNA and RNA. This is DNA-directed RNA polymerase II subunit RPB7 (polr2g) from Danio rerio (Zebrafish).